The following is a 1266-amino-acid chain: Rho GTPase-activating protein 29 (1266 aa).

4 positions are modified to phosphoserine: Ser171, Ser176, Ser179, and Ser190. The F-BAR domain occupies 192–462 (IELDNLLLKN…SAKLYDPGQE (271 aa)). Residues 296-418 (RKNEMEKQRK…EILTQLRTLV (123 aa)) adopt a coiled-coil conformation. Residues 482–501 (NVNKQMTNSPQTSGYEPADS) form a disordered region. Positions 483–495 (VNKQMTNSPQTSG) are enriched in polar residues. Phosphoserine occurs at positions 501, 521, and 554. A compositionally biased stretch (low complexity) spans 542–561 (DSESTGGSSESRSLDSESIS). The disordered stretch occupies residues 542-601 (DSESTGGSSESRSLDSESISPGDFHRKLPRTPSSGTMSSADDLDEREPPSPSEAGPNSLG). A Phorbol-ester/DAG-type zinc finger spans residues 614-659 (THKFRKLRSPTKCRDCDGIVMFPGVECEECLLVCHRKCLENLVIIC). Positions 673 to 888 (AEFIQVAKKE…FLITYSQKIF (216 aa)) constitute a Rho-GAP domain. Residues Ser920, Ser956, and Ser1028 each carry the phosphoserine modification. Disordered stretches follow at residues 1039 to 1081 (SSPT…KVNG), 1116 to 1157 (GLTV…ATAV), and 1209 to 1266 (KSDP…PQFV). Polar residues predominate over residues 1072 to 1081 (SNTTRSKVNG). The segment covering 1124-1136 (NRDHPGSKAHAEP) has biased composition (basic and acidic residues). Phosphoserine occurs at positions 1149 and 1151. The span at 1256-1266 (EDLEDEIPQFV) shows a compositional bias: acidic residues. Residues 1263 to 1266 (PQFV) form an interaction with PTPN13/PTPL1 region.

Interacts with PTPN13/PTPL1. Interacts with RAP2A via its coiled coil domain. Interacts with RASIP1.

GTPase activator for the Rho-type GTPases by converting them to an inactive GDP-bound state. Has strong activity toward RHOA, and weaker activity toward RAC1 and CDC42. May act as a specific effector of RAP2A to regulate Rho. In concert with RASIP1, suppresses RhoA signaling and dampens ROCK and MYH9 activities in endothelial cells and plays an essential role in blood vessel tubulogenesis. In Mus musculus (Mouse), this protein is Rho GTPase-activating protein 29 (Arhgap29).